Consider the following 340-residue polypeptide: Dof zinc finger protein DOF2.2 (340 aa).

Residues 12–33 (PPINWPQSANPNNHPHHHQLQE) form a disordered region. The Dof-type zinc-finger motif lies at 94–148 (LKCPRCDSANTKFCYFNNYNLTQPRHFCKACRRYWTRGGALRNVPVGGGCRRNKK). Residues C96, C99, C121, and C124 each contribute to the Zn(2+) site. Disordered stretches follow at residues 138–180 (PVGG…TSNV) and 301–340 (GNIS…QHLM). Positions 151–165 (SGNSKSSSSSQNKQS) are enriched in low complexity. Composition is skewed to polar residues over residues 166-180 (TSMV…TSNV) and 309-331 (GLTS…GSSS).

It localises to the nucleus. In terms of biological role, transcription factor that binds specifically to a 5'-AA[AG]G-3' consensus core sequence. This Arabidopsis thaliana (Mouse-ear cress) protein is Dof zinc finger protein DOF2.2 (DOF2.2).